The primary structure comprises 707 residues: Drebrin (707 aa).

A2 carries the N-acetylalanine modification. In terms of domain architecture, ADF-H spans G3–S134. S141 and S142 each carry phosphoserine. Residues E209–R236 are compositionally biased toward basic and acidic residues. 5 disordered regions span residues E209–E438, A452–A497, W531–S557, L582–A609, and L630–D707. Position 241 is a phosphoserine (S241). Positions D288–E298 are enriched in basic and acidic residues. Residues S329 to P343 show a composition bias toward low complexity. S342 is modified (phosphoserine). Positions R355–P364 are enriched in polar residues. Phosphothreonine occurs at positions 377 and 381. Residues P380 to T395 show a composition bias toward polar residues. S383, S385, and S391 each carry phosphoserine. At T392 the chain carries Phosphothreonine. The segment covering Q409–A420 has biased composition (pro residues). Basic and acidic residues predominate over residues P428–E438. Phosphoserine is present on S467. A Phosphothreonine modification is found at T549. Over residues N639 to S652 the composition is skewed to polar residues. Residue S659 is modified to Phosphoserine. Acidic residues predominate over residues P695–D707.

Interacts with RUFY. Interacts with CXCR4; this interaction is enhanced by antigenic stimulation. Interacts (via ADF-H domain) with ZMYND8 (via N-terminus); the interaction leads to sequestering of ZMYND8 in the cytoplasm. Post-translationally, ISGylated. In terms of tissue distribution, brain neurons.

It localises to the cytoplasm. It is found in the cell projection. The protein resides in the dendrite. Its subcellular location is the cell cortex. The protein localises to the cell junction. It localises to the growth cone. Actin cytoskeleton-organizing protein that plays a role in the formation of cell projections. Required for actin polymerization at immunological synapses (IS) and for the recruitment of the chemokine receptor CXCR4 to IS. Plays a role in dendritic spine morphogenesis and organization, including the localization of the dopamine receptor DRD1 to the dendritic spines. Involved in memory-related synaptic plasticity in the hippocampus. The polypeptide is Drebrin (Dbn1) (Rattus norvegicus (Rat)).